The primary structure comprises 202 residues: MPKVIGLTGGIATGKSTVSELLTAFGFKVVDADIAARKAVAKGTKGLEQVRAAFGDSAITEEGEMDRKYVGEIVFNHPEKRLELNDIVHPIVREIMEEEKQSYLNQGYDVIMDIPLLFENELQNTVDEVWLVYTSESIQIERLMERNQLSLEDAKARVYSQISIDKKSRMADHVIDNLGDKLELKQNLEQLLTDKGFINKER.

A DPCK domain is found at 4 to 202 (VIGLTGGIAT…TDKGFINKER (199 aa)). 12-17 (ATGKST) contacts ATP.

Belongs to the CoaE family.

The protein localises to the cytoplasm. The catalysed reaction is 3'-dephospho-CoA + ATP = ADP + CoA + H(+). Its pathway is cofactor biosynthesis; coenzyme A biosynthesis; CoA from (R)-pantothenate: step 5/5. Catalyzes the phosphorylation of the 3'-hydroxyl group of dephosphocoenzyme A to form coenzyme A. The chain is Dephospho-CoA kinase from Staphylococcus haemolyticus (strain JCSC1435).